The primary structure comprises 515 residues: GMP synthase [glutamine-hydrolyzing] (515 aa).

In terms of domain architecture, Glutamine amidotransferase type-1 spans 10 to 200; sequence TIIVLDFGSQ…VFGVCGCSEG (191 aa). Cysteine 87 acts as the Nucleophile in catalysis. Catalysis depends on residues histidine 174 and glutamate 176. Residues 201–390 enclose the GMPS ATP-PPase domain; the sequence is WNMENFIEVE…LGIPDEIVWR (190 aa). Residue 228–234 participates in ATP binding; sequence SGGVDSS.

Homodimer.

The enzyme catalyses XMP + L-glutamine + ATP + H2O = GMP + L-glutamate + AMP + diphosphate + 2 H(+). It participates in purine metabolism; GMP biosynthesis; GMP from XMP (L-Gln route): step 1/1. Catalyzes the synthesis of GMP from XMP. This is GMP synthase [glutamine-hydrolyzing] from Bacillus cereus (strain ATCC 14579 / DSM 31 / CCUG 7414 / JCM 2152 / NBRC 15305 / NCIMB 9373 / NCTC 2599 / NRRL B-3711).